Here is a 161-residue protein sequence, read N- to C-terminus: Putative allophycocyanin subunit alpha 2 (161 aa).

Residue N71 is modified to N4-methylasparagine. Position 81 (C81) interacts with (2R,3E)-phycocyanobilin.

Belongs to the phycobiliprotein family. As to quaternary structure, heterohexamer of two alpha chains, one alpha-B chain and three beta chains. Post-translationally, contains one covalently linked phycocyanobilin chromophore. The chromophore is added by phycocyanobilin lyase CpcS 1.

It localises to the cellular thylakoid membrane. Light-harvesting photosynthetic bile pigment-protein from the phycobiliprotein complex. Allophycocyanin has a maximum absorption at approximately 650 to 653 nanometers. This is Putative allophycocyanin subunit alpha 2 (apcA2) from Nostoc sp. (strain PCC 7120 / SAG 25.82 / UTEX 2576).